The chain runs to 459 residues: Pup--protein ligase (459 aa).

E9 is a Mg(2+) binding site. ATP is bound at residue R54. Y56 contributes to the Mg(2+) binding site. D58 functions as the Proton acceptor in the catalytic mechanism. E64 is a binding site for Mg(2+). 2 residues coordinate ATP: T67 and W421.

Belongs to the Pup ligase/Pup deamidase family. Pup-conjugating enzyme subfamily.

It catalyses the reaction ATP + [prokaryotic ubiquitin-like protein]-L-glutamate + [protein]-L-lysine = ADP + phosphate + N(6)-([prokaryotic ubiquitin-like protein]-gamma-L-glutamyl)-[protein]-L-lysine.. Its pathway is protein degradation; proteasomal Pup-dependent pathway. It functions in the pathway protein modification; protein pupylation. Catalyzes the covalent attachment of the prokaryotic ubiquitin-like protein modifier Pup to the proteasomal substrate proteins, thereby targeting them for proteasomal degradation. This tagging system is termed pupylation. The ligation reaction involves the side-chain carboxylate of the C-terminal glutamate of Pup and the side-chain amino group of a substrate lysine. The polypeptide is Pup--protein ligase (Jonesia denitrificans (strain ATCC 14870 / DSM 20603 / BCRC 15368 / CIP 55.134 / JCM 11481 / NBRC 15587 / NCTC 10816 / Prevot 55134) (Listeria denitrificans)).